The sequence spans 209 residues: Imidazole glycerol phosphate synthase subunit HisH (209 aa).

One can recognise a Glutamine amidotransferase type-1 domain in the interval 1-205; that stretch reads MIAIIDYGMG…KGVVETWKSS (205 aa). The active-site Nucleophile is the cysteine 79. Residues histidine 180 and glutamate 182 contribute to the active site.

In terms of assembly, heterodimer of HisH and HisF.

Its subcellular location is the cytoplasm. The catalysed reaction is 5-[(5-phospho-1-deoxy-D-ribulos-1-ylimino)methylamino]-1-(5-phospho-beta-D-ribosyl)imidazole-4-carboxamide + L-glutamine = D-erythro-1-(imidazol-4-yl)glycerol 3-phosphate + 5-amino-1-(5-phospho-beta-D-ribosyl)imidazole-4-carboxamide + L-glutamate + H(+). It carries out the reaction L-glutamine + H2O = L-glutamate + NH4(+). The protein operates within amino-acid biosynthesis; L-histidine biosynthesis; L-histidine from 5-phospho-alpha-D-ribose 1-diphosphate: step 5/9. IGPS catalyzes the conversion of PRFAR and glutamine to IGP, AICAR and glutamate. The HisH subunit catalyzes the hydrolysis of glutamine to glutamate and ammonia as part of the synthesis of IGP and AICAR. The resulting ammonia molecule is channeled to the active site of HisF. This Bacillus anthracis (strain A0248) protein is Imidazole glycerol phosphate synthase subunit HisH.